The sequence spans 148 residues: Hut operon positive regulatory protein (148 aa).

This sequence belongs to the HutP family. As to quaternary structure, homohexamer.

Functionally, antiterminator that binds to cis-acting regulatory sequences on the mRNA in the presence of histidine, thereby suppressing transcription termination and activating the hut operon for histidine utilization. This chain is Hut operon positive regulatory protein, found in Bacillus velezensis (strain DSM 23117 / BGSC 10A6 / LMG 26770 / FZB42) (Bacillus amyloliquefaciens subsp. plantarum).